We begin with the raw amino-acid sequence, 169 residues long: MTVANRRIAVYPGTFDPITNGHIDLVSRAAPLFEKVVVGVAQSPSKGPALPLEQRVQLARGALGHHGNVEVIGFDTLLAHFVRSVQGGVLLRGLRAVSDFEYEFQMASMNRHLIPEVETLFLTPAEQHSFISSSLVREIARLGGDVSGFVPAAVLEALRKVREAKAAQS.

Position 14 (T14) interacts with substrate. ATP-binding positions include T14–F15 and H22. 3 residues coordinate substrate: K46, L78, and R92. ATP-binding positions include G93–R95, E103, and H128–S134.

This sequence belongs to the bacterial CoaD family. In terms of assembly, homohexamer. Mg(2+) serves as cofactor.

The protein localises to the cytoplasm. The catalysed reaction is (R)-4'-phosphopantetheine + ATP + H(+) = 3'-dephospho-CoA + diphosphate. Its pathway is cofactor biosynthesis; coenzyme A biosynthesis; CoA from (R)-pantothenate: step 4/5. Reversibly transfers an adenylyl group from ATP to 4'-phosphopantetheine, yielding dephospho-CoA (dPCoA) and pyrophosphate. This chain is Phosphopantetheine adenylyltransferase, found in Stenotrophomonas maltophilia (strain K279a).